Reading from the N-terminus, the 132-residue chain is Large-conductance mechanosensitive channel (132 aa).

Helical transmembrane passes span 14–34 (VLDM…VDSL), 39–59 (INPI…AVTI), and 68–88 (IGNF…VFLI).

Belongs to the MscL family. In terms of assembly, homopentamer.

Its subcellular location is the cell membrane. Functionally, channel that opens in response to stretch forces in the membrane lipid bilayer. May participate in the regulation of osmotic pressure changes within the cell. This chain is Large-conductance mechanosensitive channel, found in Latilactobacillus sakei subsp. sakei (strain 23K) (Lactobacillus sakei subsp. sakei).